A 596-amino-acid chain; its full sequence is Chaperone protein DnaK (596 aa).

Position 180 is a phosphothreonine; by autocatalysis (threonine 180).

Belongs to the heat shock protein 70 family.

In terms of biological role, acts as a chaperone. The sequence is that of Chaperone protein DnaK from Thermosipho melanesiensis (strain DSM 12029 / CIP 104789 / BI429).